The following is a 269-amino-acid chain: Type II restriction enzyme SfiI (269 aa).

The enzyme catalyses Endonucleolytic cleavage of DNA to give specific double-stranded fragments with terminal 5'-phosphates.. Functionally, an F and P subtype restriction enzyme that recognizes the double-stranded sequence 5'-GGCCN(5)GGCC-3' and cleaves before N-9. This chain is Type II restriction enzyme SfiI (sfiIR), found in Streptomyces fimbriatus.